Here is a 566-residue protein sequence, read N- to C-terminus: Arginine--tRNA ligase (566 aa).

A 'HIGH' region motif is present at residues 123–133 (PNIAKPFHIGH).

Belongs to the class-I aminoacyl-tRNA synthetase family. Monomer.

The protein resides in the cytoplasm. The enzyme catalyses tRNA(Arg) + L-arginine + ATP = L-arginyl-tRNA(Arg) + AMP + diphosphate. This Halothermothrix orenii (strain H 168 / OCM 544 / DSM 9562) protein is Arginine--tRNA ligase.